The following is a 319-amino-acid chain: GTP 3',8-cyclase (319 aa).

Positions Lys-4–Glu-219 constitute a Radical SAM core domain. Residue Arg-13 participates in GTP binding. [4Fe-4S] cluster is bound by residues Cys-20 and Cys-24. Tyr-26 contacts S-adenosyl-L-methionine. Position 27 (Cys-27) interacts with [4Fe-4S] cluster. Arg-63 is a GTP binding site. S-adenosyl-L-methionine is bound at residue Gly-67. Residue Thr-94 coordinates GTP. S-adenosyl-L-methionine is bound at residue Ser-118. Lys-155 serves as a coordination point for GTP. S-adenosyl-L-methionine is bound at residue Met-189. Residues Cys-249 and Cys-252 each contribute to the [4Fe-4S] cluster site. Residue Arg-254–Arg-256 coordinates GTP. Cys-266 contacts [4Fe-4S] cluster.

It belongs to the radical SAM superfamily. MoaA family. As to quaternary structure, monomer and homodimer. [4Fe-4S] cluster serves as cofactor.

The enzyme catalyses GTP + AH2 + S-adenosyl-L-methionine = (8S)-3',8-cyclo-7,8-dihydroguanosine 5'-triphosphate + 5'-deoxyadenosine + L-methionine + A + H(+). The protein operates within cofactor biosynthesis; molybdopterin biosynthesis. Catalyzes the cyclization of GTP to (8S)-3',8-cyclo-7,8-dihydroguanosine 5'-triphosphate. The polypeptide is GTP 3',8-cyclase (Clostridium botulinum (strain Okra / Type B1)).